Here is a 296-residue protein sequence, read N- to C-terminus: Beta-lactamase (296 aa).

Positions 1–21 are cleaved as a signal peptide; it reads MKAYFIAILTLFTCIATVVRA. Catalysis depends on Ser-66, which acts as the Acyl-ester intermediate. 235–237 contributes to the substrate binding site; the sequence is KTG.

The protein belongs to the class-A beta-lactamase family.

It carries out the reaction a beta-lactam + H2O = a substituted beta-amino acid. The polypeptide is Beta-lactamase (cblA) (Bacteroides uniformis).